We begin with the raw amino-acid sequence, 676 residues long: MSSLQELCSGLPLRPLPENRGRWAGVPHAPVRTPNLSPEEEQLALRNALRYFPPDVQKLLALEFAQELRQFGHIYMYRFCPSIEMRAYPIDQYPCRTRAAAAIMHMIMNNLDPAVAQFPQELVTYGGNGQVFSNWAQFRLTMSYLSKMTEEQTLVMYSGHPLGLFPSSPRAPRLVITNGMVIPNYSSRTEYEKLFALGVTMYGQMTAGSYCYIGPQGIVHGTVLTVLNAGRRYLGIENLAGKVFVTSGLGGMSGAQAKAAAIVGCIGVIAEVDKAALVKRHRQGWLMEVTDSLDRCIARLREARKKKEVLSLGYHGNVVDLWERLVHELDTTGELLVDLGSDQTSCHNPFNGGYYPVQLSFSEAQSLMSSNPAAFKHLVQESLRRHVAAINRLAQEKFFFWDYGNAFLLEAQRAGADVEKKGANKMEFRYPSYVQHIMGDIFSQGFGPFRWVCTSGDPQDLAVTDHLATSVLEKAIADGVKASVKLQYMDNIRWIREAAKHQLVVGSQARILYSDQKGRVAIAVAINQAIASGKIKAPVVLSRDHHDVSGTDSPFRETSNIYDGSAFCADMAVQNFVGDACRGATWVALHNGGGVGWGEVINGGFGLVLDGTAEAEQKARMMLSWDVSNGVARRCWSGNPKAYEIICQTMQENSGLVVTLPHEVADEQVLQQALRP.

Residues 126 to 127 (GG), glutamine 204, 251 to 253 (GMS), glutamate 271, 317 to 318 (NV), 343 to 347 (QTSCH), 354 to 355 (YY), and tyrosine 403 contribute to the NAD(+) site. N6-succinyllysine is present on lysine 534. Glycine 594 contacts NAD(+).

The protein belongs to the urocanase family. Requires NAD(+) as cofactor.

It carries out the reaction 4-imidazolone-5-propanoate = trans-urocanate + H2O. It participates in amino-acid degradation; L-histidine degradation into L-glutamate; N-formimidoyl-L-glutamate from L-histidine: step 2/3. This chain is Urocanate hydratase (Uroc1), found in Mus musculus (Mouse).